A 289-amino-acid chain; its full sequence is D-alanine aminotransferase (289 aa).

A substrate-binding site is contributed by tyrosine 31. Position 50 (arginine 50) interacts with pyridoxal 5'-phosphate. Residues arginine 99 and histidine 101 each coordinate substrate. Lysine 147 is modified (N6-(pyridoxal phosphate)lysine). Residue glutamate 179 participates in pyridoxal 5'-phosphate binding.

The protein belongs to the class-IV pyridoxal-phosphate-dependent aminotransferase family. Homodimer. The cofactor is pyridoxal 5'-phosphate.

The catalysed reaction is D-alanine + 2-oxoglutarate = D-glutamate + pyruvate. Acts on the D-isomers of alanine, leucine, aspartate, glutamate, aminobutyrate, norvaline and asparagine. The enzyme transfers an amino group from a substrate D-amino acid to the pyridoxal phosphate cofactor to form pyridoxamine and an alpha-keto acid in the first half-reaction. The second half-reaction is the reverse of the first, transferring the amino group from the pyridoxamine to a second alpha-keto acid to form the product D-amino acid via a ping-pong mechanism. This is an important process in the formation of D-alanine and D-glutamate, which are essential bacterial cell wall components. This chain is D-alanine aminotransferase (dat), found in Listeria monocytogenes serovar 1/2a (strain ATCC BAA-679 / EGD-e).